We begin with the raw amino-acid sequence, 582 residues long: uncharacterized protein (582 aa).

Residues 1 to 27 form the signal peptide; that stretch reads MNYAVLPPELNSLRMFTGAGSAPMLAA. Residues 241–257 show a composition bias toward gly residues; that stretch reads GNGRAGLPGSGNVGNGN. Residues 241–278 are disordered; sequence GNGRAGLPGSGNVGNGNLGNSNLGSGNTGNSNVGFGNT. Residues 258–278 show a composition bias toward low complexity; the sequence is LGNSNLGSGNTGNSNVGFGNT.

The protein belongs to the mycobacterial PPE family.

This is an uncharacterized protein from Mycobacterium tuberculosis (strain ATCC 25618 / H37Rv).